A 350-amino-acid chain; its full sequence is Cytochrome c biogenesis protein CcsA (350 aa).

Transmembrane regions (helical) follow at residues Asn23–Pro43, Leu47–Leu67, Leu82–His102, Trp108–Leu128, Val153–Ile173, Leu258–Asn278, Trp293–Trp313, and Ala319–Leu339.

It belongs to the CcmF/CycK/Ccl1/NrfE/CcsA family. May interact with ccs1.

The protein resides in the cellular thylakoid membrane. Required during biogenesis of c-type cytochromes (cytochrome c6 and cytochrome f) at the step of heme attachment. The polypeptide is Cytochrome c biogenesis protein CcsA (Synechococcus sp. (strain JA-2-3B'a(2-13)) (Cyanobacteria bacterium Yellowstone B-Prime)).